A 339-amino-acid chain; its full sequence is Dual specificity protein phosphatase 12 (339 aa).

Position 1 is an N-acetylmethionine (Met-1). Positions 1 to 25 (MLEAQGSNHGCERQAPTASPASSAG) are disordered. A Tyrosine-protein phosphatase domain is found at 26–170 (HAVEVRPGLY…LKLYEAMGYE (145 aa)). Catalysis depends on Cys-114, which acts as the Phosphocysteine intermediate. 115 to 120 (HAGVSR) is a binding site for substrate. At Ser-334 the chain carries Phosphoserine.

It belongs to the protein-tyrosine phosphatase family. Non-receptor class dual specificity subfamily. As to quaternary structure, monomer. Zn(2+) is required as a cofactor.

It is found in the nucleus. Its subcellular location is the cytoplasm. The protein localises to the cytosol. It catalyses the reaction O-phospho-L-tyrosyl-[protein] + H2O = L-tyrosyl-[protein] + phosphate. It carries out the reaction O-phospho-L-seryl-[protein] + H2O = L-seryl-[protein] + phosphate. The enzyme catalyses O-phospho-L-threonyl-[protein] + H2O = L-threonyl-[protein] + phosphate. Its function is as follows. Dual specificity phosphatase; can dephosphorylate both phosphotyrosine and phosphoserine or phosphothreonine residues. Can dephosphorylate glucokinase (in vitro). Has phosphatase activity with the synthetic substrate 6,8-difluoro-4-methylumbelliferyl phosphate and other in vitro substrates. The sequence is that of Dual specificity protein phosphatase 12 (Dusp12) from Mus musculus (Mouse).